The primary structure comprises 252 residues: tRNA-cytidine(32) 2-sulfurtransferase (252 aa).

A PP-loop motif motif is present at residues 37–42 (SGGKDS). [4Fe-4S] cluster-binding residues include Cys-112, Cys-115, and Cys-202.

It belongs to the TtcA family. Homodimer. Mg(2+) serves as cofactor. It depends on [4Fe-4S] cluster as a cofactor.

It localises to the cytoplasm. The catalysed reaction is cytidine(32) in tRNA + S-sulfanyl-L-cysteinyl-[cysteine desulfurase] + AH2 + ATP = 2-thiocytidine(32) in tRNA + L-cysteinyl-[cysteine desulfurase] + A + AMP + diphosphate + H(+). Its pathway is tRNA modification. In terms of biological role, catalyzes the ATP-dependent 2-thiolation of cytidine in position 32 of tRNA, to form 2-thiocytidine (s(2)C32). The sulfur atoms are provided by the cysteine/cysteine desulfurase (IscS) system. In Geotalea uraniireducens (strain Rf4) (Geobacter uraniireducens), this protein is tRNA-cytidine(32) 2-sulfurtransferase.